The following is a 346-amino-acid chain: Methylthioribose-1-phosphate isomerase (346 aa).

Substrate contacts are provided by residues arginine 46 to alanine 48, arginine 89, and glutamine 196. Residue aspartate 237 is the Proton donor of the active site. Substrate is bound at residue asparagine 247–lysine 248.

It belongs to the eIF-2B alpha/beta/delta subunits family. MtnA subfamily.

The enzyme catalyses 5-(methylsulfanyl)-alpha-D-ribose 1-phosphate = 5-(methylsulfanyl)-D-ribulose 1-phosphate. It participates in amino-acid biosynthesis; L-methionine biosynthesis via salvage pathway; L-methionine from S-methyl-5-thio-alpha-D-ribose 1-phosphate: step 1/6. Catalyzes the interconversion of methylthioribose-1-phosphate (MTR-1-P) into methylthioribulose-1-phosphate (MTRu-1-P). The protein is Methylthioribose-1-phosphate isomerase of Geobacter sp. (strain M21).